The chain runs to 483 residues: tRNA-2-methylthio-N(6)-dimethylallyladenosine synthase (483 aa).

Residues 31-148 enclose the MTTase N-terminal domain; the sequence is KKLYIETQGC…LPQMLDQHHA (118 aa). The [4Fe-4S] cluster site is built by C40, C77, C111, C192, C196, and C199. In terms of domain architecture, Radical SAM core spans 178 to 410; that stretch reads RVEGFKAFVS…QQVIKQSSIE (233 aa). Positions 413–477 constitute a TRAM domain; sequence DAMLGKIERV…LNLVYGELLN (65 aa).

Belongs to the methylthiotransferase family. MiaB subfamily. As to quaternary structure, monomer. [4Fe-4S] cluster serves as cofactor.

It localises to the cytoplasm. The enzyme catalyses N(6)-dimethylallyladenosine(37) in tRNA + (sulfur carrier)-SH + AH2 + 2 S-adenosyl-L-methionine = 2-methylsulfanyl-N(6)-dimethylallyladenosine(37) in tRNA + (sulfur carrier)-H + 5'-deoxyadenosine + L-methionine + A + S-adenosyl-L-homocysteine + 2 H(+). Its function is as follows. Catalyzes the methylthiolation of N6-(dimethylallyl)adenosine (i(6)A), leading to the formation of 2-methylthio-N6-(dimethylallyl)adenosine (ms(2)i(6)A) at position 37 in tRNAs that read codons beginning with uridine. This is tRNA-2-methylthio-N(6)-dimethylallyladenosine synthase from Acinetobacter baumannii (strain AB0057).